The primary structure comprises 349 residues: Protein DMR6-LIKE OXYGENASE 1 (349 aa).

Residues His197–Pro296 enclose the Fe2OG dioxygenase domain. A 2-oxoglutarate-binding site is contributed by Tyr206. His221, Asp223, and His277 together coordinate Fe cation. 2 residues coordinate 2-oxoglutarate: Arg287 and Ser289.

Belongs to the iron/ascorbate-dependent oxidoreductase family. Requires L-ascorbate as cofactor. Fe(2+) serves as cofactor.

The catalysed reaction is salicylate + NADH + O2 + H(+) = 2,3-dihydroxybenzoate + NAD(+) + H2O. Converts salicylic acid (SA) to both 2,3-dihydroxybenzoic acid (2,3-DHBA) and 2,5-DHBA in vitro but only 2,3-DHBA in vivo. Component of a negative feedback regulation system of SA levels during senescence. Regulates both onset and progression of leaf senescence. Negative regulator of defense against Hyaloperonospora arabidopsidis. Its function is as follows. (Microbial infection) Confers susceptibility to the downy mildew pathogen Hyaloperonospora arabidopsidis. The protein is Protein DMR6-LIKE OXYGENASE 1 of Arabidopsis thaliana (Mouse-ear cress).